The chain runs to 178 residues: MSEKQELATFAGGCFWCMVKPFDEQPGIIKVESGYTGGHTVNPTYEEVCTNTTGHREAVQITFDPDIFPYEKLLELYWQQIDPTDDGGQFGDRGESYRTGIYVHHDEQRKLAEASKEKLNESGIFQKPIVTEILDAAPFYPAEEYHQHYYKKNKIHYERYHVGSGRAGFIESHWSDKS.

C14 is an active-site residue.

The protein belongs to the MsrA Met sulfoxide reductase family.

The enzyme catalyses L-methionyl-[protein] + [thioredoxin]-disulfide + H2O = L-methionyl-(S)-S-oxide-[protein] + [thioredoxin]-dithiol. The catalysed reaction is [thioredoxin]-disulfide + L-methionine + H2O = L-methionine (S)-S-oxide + [thioredoxin]-dithiol. Its function is as follows. Has an important function as a repair enzyme for proteins that have been inactivated by oxidation. Catalyzes the reversible oxidation-reduction of methionine sulfoxide in proteins to methionine. This is Peptide methionine sulfoxide reductase MsrA from Bacillus pumilus (strain SAFR-032).